The sequence spans 298 residues: ADP/ATP translocase 1 (298 aa).

At 1 to 7 (MGDHAWS) the chain is on the mitochondrial intermembrane side. Position 2 is an N-acetylglycine (Gly-2). A Solcar 1 repeat occupies 6–98 (WSFLKDFLAG…FAFKDKYKQL (93 aa)). Residue Ser-7 is modified to Phosphoserine. The helical transmembrane segment at 8–37 (FLKDFLAGGVAAAVSKTAVAPIERVKLLLQ) threads the bilayer. At 38–74 (VQHASKQISAEKQYKGIIDCVVRIPKEQGFLSFWRGN) the chain is on the mitochondrial matrix side. Lys-52 carries the post-translational modification N6,N6,N6-trimethyllysine. The chain crosses the membrane as a helical span at residues 75-99 (LANVIRYFPTQALNFAFKDKYKQLF). Arg-80 and Lys-92 together coordinate ADP. Topologically, residues 100-109 (LGGVDRHKQF) are mitochondrial intermembrane. Residues 110 to 130 (WRYFAGNLASGGAAGATSLCF) form a helical membrane-spanning segment. Solcar repeat units follow at residues 111 to 201 (RYFA…AKGM) and 212 to 297 (VSWM…IKKY). The Mitochondrial matrix segment spans residues 131 to 178 (VYPLDFARTRLAADVGKGAAQREFHGLGDCIIKIFKSDGLRGLYQGFN). Residue Lys-147 is modified to N6-succinyllysine. Residue Cys-160 is modified to S-nitrosocysteine. A helical membrane pass occupies residues 179–199 (VSVQGIIIYRAAYFGVYDTAK). Topologically, residues 200–210 (GMLPDPKNVHI) are mitochondrial intermembrane. A helical membrane pass occupies residues 211–231 (FVSWMIAQSVTAVAGLVSYPF). The Mitochondrial matrix portion of the chain corresponds to 232 to 273 (DTVRRRMMMQSGRKGADIMYTGTVDCWRKIAKDEGAKAFFKG). Arg-235 is a binding site for ADP. The important for transport activity stretch occupies residues 235-240 (RRRMMM). The Nucleotide carrier signature motif signature appears at 235–240 (RRRMMM). An N6-succinyllysine mark is found at Lys-245 and Lys-272. The chain crosses the membrane as a helical span at residues 274-291 (AWSNVLRGMGGAFVLVLY). Over 292–298 (DEIKKYV) the chain is Mitochondrial intermembrane.

It belongs to the mitochondrial carrier (TC 2.A.29) family. As to quaternary structure, monomer. Found in a complex with ARL2, ARL2BP and SLC25A4/ANT1. Interacts with ARL2BP. Interacts with ARHGAP11B, thereby inhibiting the mitochondrial permeability transition pore (mPTP). Interacts with TIMM44; leading to inhibit the presequence translocase TIMM23, thereby promoting stabilization of PINK1. In terms of assembly, (Microbial infection) Interacts with HIV-1 Vpr. Under cell death induction, transglutaminated by TGM2. Transglutamination leads to formation of covalent cross-links between a glutamine and the epsilon-amino group of a lysine residue, forming polymers. In terms of tissue distribution, expressed in erythrocytes (at protein level).

It localises to the mitochondrion inner membrane. Its subcellular location is the membrane. The enzyme catalyses ADP(in) + ATP(out) = ADP(out) + ATP(in). It carries out the reaction H(+)(in) = H(+)(out). Its activity is regulated as follows. The matrix-open state (m-state) is inhibited by the membrane-permeable bongkrekic acid (BKA). The cytoplasmic-open state (c-state) is inhibited by the membrane-impermeable toxic inhibitor carboxyatractyloside (CATR). Proton transporter activity is inhibited by ADP:ATP antiporter activity. In terms of biological role, ADP:ATP antiporter that mediates import of ADP into the mitochondrial matrix for ATP synthesis, and export of ATP out to fuel the cell. Cycles between the cytoplasmic-open state (c-state) and the matrix-open state (m-state): operates by the alternating access mechanism with a single substrate-binding site intermittently exposed to either the cytosolic (c-state) or matrix (m-state) side of the inner mitochondrial membrane. In addition to its ADP:ATP antiporter activity, also involved in mitochondrial uncoupling and mitochondrial permeability transition pore (mPTP) activity. Plays a role in mitochondrial uncoupling by acting as a proton transporter: proton transport uncouples the proton flows via the electron transport chain and ATP synthase to reduce the efficiency of ATP production and cause mitochondrial thermogenesis. Proton transporter activity is inhibited by ADP:ATP antiporter activity, suggesting that SLC25A4/ANT1 acts as a master regulator of mitochondrial energy output by maintaining a delicate balance between ATP production (ADP:ATP antiporter activity) and thermogenesis (proton transporter activity). Proton transporter activity requires free fatty acids as cofactor, but does not transport it. Also plays a key role in mPTP opening, a non-specific pore that enables free passage of the mitochondrial membranes to solutes of up to 1.5 kDa, and which contributes to cell death. It is however unclear if SLC25A4/ANT1 constitutes a pore-forming component of mPTP or regulates it. Acts as a regulator of mitophagy independently of ADP:ATP antiporter activity: promotes mitophagy via interaction with TIMM44, leading to inhibit the presequence translocase TIMM23, thereby promoting stabilization of PINK1. This Homo sapiens (Human) protein is ADP/ATP translocase 1.